The sequence spans 201 residues: Peptidyl-tRNA hydrolase (201 aa).

A tRNA-binding site is contributed by Y14. H19 serves as the catalytic Proton acceptor. TRNA-binding residues include Y64, N66, and N112.

It belongs to the PTH family. In terms of assembly, monomer.

The protein localises to the cytoplasm. It carries out the reaction an N-acyl-L-alpha-aminoacyl-tRNA + H2O = an N-acyl-L-amino acid + a tRNA + H(+). Its function is as follows. Hydrolyzes ribosome-free peptidyl-tRNAs (with 1 or more amino acids incorporated), which drop off the ribosome during protein synthesis, or as a result of ribosome stalling. In terms of biological role, catalyzes the release of premature peptidyl moieties from peptidyl-tRNA molecules trapped in stalled 50S ribosomal subunits, and thus maintains levels of free tRNAs and 50S ribosomes. In Afipia carboxidovorans (strain ATCC 49405 / DSM 1227 / KCTC 32145 / OM5) (Oligotropha carboxidovorans), this protein is Peptidyl-tRNA hydrolase.